The chain runs to 594 residues: (E)-beta-ocimene synthase TPS6FN (594 aa).

(2E)-geranyl diphosphate-binding residues include Arg-303, Asp-340, Asp-344, Arg-489, and Asn-492. The Mg(2+) site is built by Asp-340 and Asp-344. Positions 340–344 match the DDXXD motif motif; it reads DDIYD. Mg(2+) contacts are provided by Asn-492, Thr-496, and Glu-500.

Belongs to the terpene synthase family. Tpsb subfamily. The cofactor is Mg(2+). Mn(2+) is required as a cofactor. As to expression, expressed in glandular trichomes two to four weeks after flowering onset.

It carries out the reaction (2E)-geranyl diphosphate = (E)-beta-ocimene + diphosphate. The catalysed reaction is (2E)-geranyl diphosphate = (Z)-beta-ocimene + diphosphate. Its pathway is secondary metabolite biosynthesis; terpenoid biosynthesis. Its function is as follows. Involved in monoterpene (C10) olefins biosynthesis, constituants of cannabinoids and terpenoids-rich resins. Catalyzes mainly the conversion of (2E)-geranyl diphosphate to (E)-beta-ocimene, and also produces minor products such as (Z)-beta-ocimene. This is (E)-beta-ocimene synthase TPS6FN from Cannabis sativa (Hemp).